We begin with the raw amino-acid sequence, 397 residues long: N-acetyllactosaminide beta-1,3-N-acetylglucosaminyltransferase 2 (397 aa).

The Cytoplasmic portion of the chain corresponds to 1–7; the sequence is MSVGRRR. The chain crosses the membrane as a helical; Signal-anchor for type II membrane protein span at residues 8–28; that stretch reads VKLLGILMMANVFIYLIVEVS. Over 29–325 the chain is Lumenal; that stretch reads KNSSQDKNGK…ALRLYSATSR (297 aa). N-linked (GlcNAc...) asparagine glycans are attached at residues N30, N79, N89, N127, N173, and N219.

The protein belongs to the glycosyltransferase 31 family. Interacts with B3GNT8; this interaction greatly increases B3GNT2 catalytic activity, independently of B3GNT8 enzymatic activity. Requires Mn(2+) as cofactor. As to expression, expressed in heart, brain, lung, kidney and testis and, to a lesser extent, in liver and skeletal muscle. No expression in spleen.

It localises to the golgi apparatus membrane. It carries out the reaction a beta-D-galactosyl-(1-&gt;4)-N-acetyl-beta-D-glucosaminyl derivative + UDP-N-acetyl-alpha-D-glucosamine = an N-acetyl-beta-D-glucosaminyl-(1-&gt;3)-beta-D-galactosyl-(1-&gt;4)-N-acetyl-beta-D-glucosaminyl derivative + UDP + H(+). It functions in the pathway protein modification; protein glycosylation. Beta-1,3-N-acetylglucosaminyltransferase involved in the synthesis of poly-N-acetyllactosamine. Catalyzes the initiation and elongation of poly-N-acetyllactosamine chains. Probably constitutes the main polylactosamine synthase. The polypeptide is N-acetyllactosaminide beta-1,3-N-acetylglucosaminyltransferase 2 (B3GNT2) (Mus musculus (Mouse)).